The following is a 294-amino-acid chain: MKATLLLKAQLSPVSYTTKKSFQRQLNRTPYTAFQYFFQLEVQKLHNVSKYEDIINHVRGNSNFKRFARNEWDSMSLTKKRLYYASFCQSMDIDILNVSKIELAKRLEIPIPAMSEYLLFRNKFKVKFDSHCSSLERKDRKSVPRPSITRKVATTEICSKSRSNTPVGKINPRKRLVALKRISRSENTAKNHSHEAQNYLYDYMKRFQQMCKECRYAWNEEVDYDQKLEIRKKLQVWRAKFEEMMDNEIQILQKNMDIMSKFGLRSESYLTAANHDTNTQPNNILPMTYLLKKK.

A mitochondrion-targeting transit peptide spans 1 to 90; sequence MKATLLLKAQ…RLYYASFCQS (90 aa). The tract at residues 27-102 is HMG-box A; the sequence is NRTPYTAFQY…IDILNVSKIE (76 aa). The segment at 110-258 is HMG-box B; the sequence is PIPAMSEYLL…IQILQKNMDI (149 aa).

Its subcellular location is the mitochondrion matrix. Functionally, mitochondrial HMG-box protein that limits the copy number of mitochondrial DNA (mtDNA), antagonizing HMG-box containing protein ABF2, a mtDNA packaging factor. This Saccharomyces cerevisiae (strain ATCC 204508 / S288c) (Baker's yeast) protein is Mitochondrial HMG-box protein CIM1.